The sequence spans 157 residues: Arginine repressor (157 aa).

The protein belongs to the ArgR family.

The protein resides in the cytoplasm. It functions in the pathway amino-acid biosynthesis; L-arginine biosynthesis [regulation]. In terms of biological role, regulates arginine biosynthesis genes. This Deinococcus radiodurans (strain ATCC 13939 / DSM 20539 / JCM 16871 / CCUG 27074 / LMG 4051 / NBRC 15346 / NCIMB 9279 / VKM B-1422 / R1) protein is Arginine repressor.